A 129-amino-acid polypeptide reads, in one-letter code: Large ribosomal subunit protein bL12c (129 aa).

This sequence belongs to the bacterial ribosomal protein bL12 family. Homodimer. Part of the ribosomal stalk of the 50S ribosomal subunit. Forms a multimeric L10(L12)X complex, where L10 forms an elongated spine to which 2 to 4 L12 dimers bind in a sequential fashion. Binds GTP-bound translation factors.

The protein resides in the plastid. Its subcellular location is the chloroplast. Forms part of the ribosomal stalk which helps the ribosome interact with GTP-bound translation factors. Is thus essential for accurate translation. The protein is Large ribosomal subunit protein bL12c of Oltmannsiellopsis viridis (Marine flagellate).